Consider the following 81-residue polypeptide: Defensin-like protein b (81 aa).

A signal peptide spans 1–26 (MRNATFFIVFYVFISLVLSNVQDVTA). Cystine bridges form between cysteine 31–cysteine 81, cysteine 42–cysteine 66, cysteine 50–cysteine 76, and cysteine 64–cysteine 78.

Belongs to the DEFL family. In terms of tissue distribution, expressed in microspores and in young and mature anthers.

It is found in the secreted. Involved in self-incompatibility. The sequence is that of Defensin-like protein b (SCRb-1) from Arabidopsis lyrata (Lyre-leaved rock-cress).